The primary structure comprises 190 residues: Dynactin subunit 6 (190 aa).

T186 bears the Phosphothreonine; by CDK1 mark.

This sequence belongs to the dynactin subunits 5/6 family. Dynactin subunit 6 subfamily. In terms of assembly, subunit of dynactin, a multiprotein complex part of a tripartite complex with dynein and a adapter, such as BICDL1, BICD2 or HOOK3. The dynactin complex is built around ACTR1A/ACTB filament and consists of an actin-related filament composed of a shoulder domain, a pointed end and a barbed end. Its length is defined by its flexible shoulder domain. The soulder is composed of 2 DCTN1 subunits, 4 DCTN2 and 2 DCTN3. The 4 DCNT2 (via N-terminus) bind the ACTR1A filament and act as molecular rulers to determine the length. The pointed end is important for binding dynein-dynactin cargo adapters. Consists of 4 subunits: ACTR10, DCNT4, DCTN5 and DCTN6. Within the complex DCTN6 forms a heterodimer with DCTN5. The barbed end is composed of a CAPZA1:CAPZB heterodimers, which binds ACTR1A/ACTB filament and dynactin and stabilizes dynactin. Interacts with PLK1. Interacts with N4BP2L1. Phosphorylation at Thr-186 by CDK1 during mitotic prometaphase creates a binding site for PLK1 that facilitates its recruitment to kinetochores.

It localises to the cytoplasm. The protein resides in the cytoskeleton. Its subcellular location is the chromosome. The protein localises to the centromere. It is found in the kinetochore. Its function is as follows. Part of the dynactin complex that activates the molecular motor dynein for ultra-processive transport along microtubules. This chain is Dynactin subunit 6 (DCTN6), found in Bos taurus (Bovine).